The sequence spans 125 residues: 14 kDa phosphohistidine phosphatase (125 aa).

An N-acetylalanine modification is found at Ala-2. Substrate is bound at residue Lys-21. His-53 functions as the Proton acceptor in the catalytic mechanism. Residue 94 to 96 (SMA) coordinates substrate.

This sequence belongs to the janus family. As to quaternary structure, monomer. In terms of tissue distribution, expressed abundantly in heart and skeletal muscle.

It is found in the cytoplasm. The enzyme catalyses N(pros)-phospho-L-histidyl-[protein] + H2O = L-histidyl-[protein] + phosphate. It catalyses the reaction N(tele)-phospho-L-histidyl-[protein] + H2O = L-histidyl-[protein] + phosphate. In terms of biological role, exhibits phosphohistidine phosphatase activity. This Homo sapiens (Human) protein is 14 kDa phosphohistidine phosphatase (PHPT1).